The primary structure comprises 268 residues: Secreted RxLR effector protein 5 (268 aa).

The N-terminal stretch at 1 to 21 (MRGAFYMAITLFLARSRSATA) is a signal peptide. Positions 48–63 (RYLRDGLALSAANEER) match the RxLR-dEER motif. An N-linked (GlcNAc...) asparagine glycan is attached at N104.

This sequence belongs to the RxLR effector family.

The protein resides in the secreted. The protein localises to the host nucleus. Functionally, effector that acts as a broad suppressor of cell death to interrupt plant immunity. Inhibits cell death induced by cell death-inducing proteins, including the PAMP elicitor INF1 from P.infestans. The polypeptide is Secreted RxLR effector protein 5 (Plasmopara viticola (Downy mildew of grapevine)).